The following is a 473-amino-acid chain: Benzoyl-CoA oxygenase component B (473 aa).

It belongs to the benzoyl-CoA oxygenase component B family. As to quaternary structure, monomer. The subunit composition of the active BoxA/BoxB protein complex is not known. Fe cation serves as cofactor.

The enzyme catalyses benzoyl-CoA + NADPH + O2 + H(+) = 2,3-epoxy-2,3-dihydrobenzoyl-CoA + NADP(+) + H2O. Its function is as follows. The BoxA/BoxB complex catalyzes the aerobic reduction/oxygenation of the aromatic ring of benzoyl-CoA to form 2,3-epoxy-2,3-dihydrobenzoyl-CoA. BoxB acts as the benzoyl-CoA oxygenase, after being reduced by the reductase component BoxA. BoxAB does not act on NADH or benzoate. The sequence is that of Benzoyl-CoA oxygenase component B (boxB) from Aromatoleum evansii (Azoarcus evansii).